The following is a 308-amino-acid chain: Mu-like prophage FluMu major head subunit (308 aa).

This sequence to phage Mu protein T.

The protein is Mu-like prophage FluMu major head subunit of Haemophilus influenzae (strain ATCC 51907 / DSM 11121 / KW20 / Rd).